The primary structure comprises 290 residues: Lipoyl synthase 2 (290 aa).

Residues C37, C42, C48, C63, C67, C70, and S283 each coordinate [4Fe-4S] cluster. One can recognise a Radical SAM core domain in the interval 49 to 272 (YGQKTATFLL…GNIARELGFS (224 aa)).

Belongs to the radical SAM superfamily. Lipoyl synthase family. [4Fe-4S] cluster serves as cofactor.

The protein localises to the cytoplasm. It carries out the reaction [[Fe-S] cluster scaffold protein carrying a second [4Fe-4S](2+) cluster] + N(6)-octanoyl-L-lysyl-[protein] + 2 oxidized [2Fe-2S]-[ferredoxin] + 2 S-adenosyl-L-methionine + 4 H(+) = [[Fe-S] cluster scaffold protein] + N(6)-[(R)-dihydrolipoyl]-L-lysyl-[protein] + 4 Fe(3+) + 2 hydrogen sulfide + 2 5'-deoxyadenosine + 2 L-methionine + 2 reduced [2Fe-2S]-[ferredoxin]. It functions in the pathway protein modification; protein lipoylation via endogenous pathway; protein N(6)-(lipoyl)lysine from octanoyl-[acyl-carrier-protein]: step 2/2. Catalyzes the radical-mediated insertion of two sulfur atoms into the C-6 and C-8 positions of the octanoyl moiety bound to the lipoyl domains of lipoate-dependent enzymes, thereby converting the octanoylated domains into lipoylated derivatives. The sequence is that of Lipoyl synthase 2 from Thermosynechococcus vestitus (strain NIES-2133 / IAM M-273 / BP-1).